The chain runs to 170 residues: Large ribosomal subunit protein bL17 (170 aa).

Belongs to the bacterial ribosomal protein bL17 family. Part of the 50S ribosomal subunit. Contacts protein L32.

This chain is Large ribosomal subunit protein bL17, found in Azobacteroides pseudotrichonymphae genomovar. CFP2.